Consider the following 637-residue polypeptide: Early transcription factor 70 kDa subunit (637 aa).

Residues 32 to 185 (RTIIDENRSV…GHIIDLMSEE (154 aa)) form the Helicase ATP-binding domain. 45–52 (HIMGSGKT) is an ATP binding site. The short motif at 135–138 (DEAH) is the DEXH box element. One can recognise a Helicase C-terminal domain in the interval 327 to 507 (KFKYFINRIQ…VLPFDIKKLL (181 aa)).

It belongs to the helicase family. VETF subfamily. In terms of assembly, heterodimer of a 70 kDa and a 82 kDa subunit. Part of the early transcription complex composed of ETF, RAP94/OPG109, and the DNA-directed RNA polymerase.

It is found in the virion. Acts with RNA polymerase to initiate transcription from early gene promoters. Is recruited by the RPO-associated protein of 94 kDa RAP94/OPG109 to form the early transcription complex, which also contains the core RNA polymerase. ETF heterodimer binds to early gene promoters. This chain is Early transcription factor 70 kDa subunit (OPG118), found in Homo sapiens (Human).